The primary structure comprises 385 residues: Cytochrome b (385 aa).

Helical transmembrane passes span Phe-34–Met-54, Trp-78–Ile-99, Trp-114–Leu-134, and Phe-179–Val-199. His-84 and His-98 together coordinate heme b. The heme b site is built by His-183 and His-197. His-202 provides a ligand contact to a ubiquinone. 4 helical membrane-spanning segments follow: residues Phe-227–Leu-247, Leu-289–Ile-309, Leu-321–Ala-341, and Phe-348–Pro-368.

Belongs to the cytochrome b family. As to quaternary structure, the cytochrome bc1 complex contains 3 respiratory subunits (MT-CYB, CYC1 and UQCRFS1), 2 core proteins (UQCRC1 and UQCRC2) and probably 6 low-molecular weight proteins. Heme b is required as a cofactor.

It localises to the mitochondrion inner membrane. In terms of biological role, component of the ubiquinol-cytochrome c reductase complex (complex III or cytochrome b-c1 complex) that is part of the mitochondrial respiratory chain. The b-c1 complex mediates electron transfer from ubiquinol to cytochrome c. Contributes to the generation of a proton gradient across the mitochondrial membrane that is then used for ATP synthesis. The sequence is that of Cytochrome b (MT-CYB) from Eptatretus burgeri (Inshore hagfish).